The primary structure comprises 903 residues: Glutamate receptor ionotropic, NMDA 1 (903 aa).

An N-terminal signal peptide occupies residues 1 to 20 (MGTMRLFLLAVLFLFSFARA). The Extracellular segment spans residues 21–557 (GCDPKIVNIG…TLDSFMQPFQ (537 aa)). N-linked (GlcNAc...) asparagine glycosylation is found at asparagine 61, asparagine 203, asparagine 276, asparagine 300, asparagine 350, asparagine 368, asparagine 440, asparagine 469, and asparagine 489. The cysteines at positions 79 and 308 are disulfide-linked. 2 disulfides stabilise this stretch: cysteine 420–cysteine 452 and cysteine 436–cysteine 453. The glycine site is built by proline 514, threonine 516, and arginine 521. A helical membrane pass occupies residues 558–578 (STLWLLVGLSVHVVAVMLYLL). Residues 579–600 (DRFSPFGRFKVNSEEEEEDALT) lie on the Cytoplasmic side of the membrane. The segment at 601-620 (LSSAMWFSWGVLLNSGIGEG) is pore-forming. Positions 601–622 (LSSAMWFSWGVLLNSGIGEGAP) form an intramembrane region, discontinuously helical. The Cytoplasmic portion of the chain corresponds to 623–628 (RSFSAR). A helical membrane pass occupies residues 629-645 (ILGMVWAGFAMIIVASY). At 646-810 (TANLAAFLVL…NAPATLTFEN (165 aa)) the chain is on the extracellular side. Residues serine 686 and aspartate 730 each contribute to the glycine site. Cysteine 742 and cysteine 796 form a disulfide bridge. A glycan (N-linked (GlcNAc...) asparagine) is linked at asparagine 769. Residues 811–831 (MAGVFMLVAGGIVAGIFLIFI) form a helical membrane-spanning segment. Residues 832–903 (EIAYKRHKDA…SSKDTVNVVV (72 aa)) lie on the Cytoplasmic side of the membrane.

This sequence belongs to the glutamate-gated ion channel (TC 1.A.10.1) family. NR1/GRIN1 subfamily. Heterotetramer; the NMDAR subunits are modular and harbor tiered domains that function in concert to regulate opening and closing of the cation-selective ion channel pore. Forms heterotetrameric channels composed of two GluN1/zeta subunits (GRIN1), and two identical GluN2/epsilon subunits (GRIN2A, GRIN2B, GRIN2C or GRIN2D) or GluN3 subunits (GRIN3A or GRIN3B) (in vitro). Does not form functional channels by itself. Can also form heterotetrameric channels that contain at least two GluN1 subunits and at least two different GluN2 subunits (or a combination of one GluN2 and one GluN3 subunits) (in vitro). In vivo, the subunit composition may vary in function of the expression levels of the different subunits.

Its subcellular location is the cell membrane. It localises to the postsynaptic cell membrane. The protein resides in the postsynaptic density membrane. The protein localises to the synaptic cell membrane. The catalysed reaction is Ca(2+)(in) = Ca(2+)(out). The enzyme catalyses Na(+)(in) = Na(+)(out). It carries out the reaction K(+)(in) = K(+)(out). Its activity is regulated as follows. NMDA glutamate receptor activity is modulated by zinc ions. The NMDA glutamate receptor activity of the heterotetramer with grin2b is stimulated by micromolar levels of Zn(2+). The NMDA glutamate receptor activity of the heterotetramer with grin2a is inhibited by nanomolar levels of Zn(2+). In terms of biological role, component of N-methyl-D-aspartate (NMDA) receptors (NMDARs) that function as heterotetrameric, ligand-gated cation channels with high calcium permeability and voltage-dependent block by Mg(2+). NMDARs participate in synaptic plasticity. Channel activation requires binding of the neurotransmitter L-glutamate to the GluN2 subunit, glycine binding to the GluN1 subunit, plus membrane depolarization to eliminate channel inhibition by Mg(2+). NMDARs mediate simultaneously the potasium efflux and the influx of calcium and sodium. Each GluN2 or GluN3 subunit confers differential attributes to channel properties, including activation, deactivation and desensitization kinetics, pH sensitivity, Ca2(+) permeability, and binding to allosteric modulators. The chain is Glutamate receptor ionotropic, NMDA 1 from Xenopus laevis (African clawed frog).